The sequence spans 257 residues: Phosphonates import ATP-binding protein PhnC (257 aa).

An ABC transporter domain is found at 4–248 (IEFKNVSKVY…VFSEIYGRTI (245 aa)). 37–44 (GLSGAGKS) lines the ATP pocket.

This sequence belongs to the ABC transporter superfamily. Phosphonates importer (TC 3.A.1.9.1) family. In terms of assembly, the complex is composed of two ATP-binding proteins (PhnC), two transmembrane proteins (PhnE) and a solute-binding protein (PhnD).

The protein localises to the cell membrane. The catalysed reaction is phosphonate(out) + ATP + H2O = phosphonate(in) + ADP + phosphate + H(+). Its function is as follows. Part of the ABC transporter complex PhnCDE involved in phosphonates import. Responsible for energy coupling to the transport system. This is Phosphonates import ATP-binding protein PhnC from Staphylococcus aureus (strain COL).